A 192-amino-acid polypeptide reads, in one-letter code: Adenylate kinase (192 aa).

Residue 12–17 coordinates ATP; it reads GSGKTT. The NMP stretch occupies residues 34-63; that stretch reads STGDLLRAEVASGSELGKTIDSFISKGNLV. Residues Thr35, Arg40, 61 to 63, 88 to 91, and Gln95 contribute to the AMP site; these read NLV and GYPR. Positions 130–136 are LID; sequence GRNRGAD. Arg131 is a binding site for ATP. Residues Arg133 and Arg145 each coordinate AMP. An ATP-binding site is contributed by Arg173.

It belongs to the adenylate kinase family. Monomer.

The protein resides in the cytoplasm. The catalysed reaction is AMP + ATP = 2 ADP. The protein operates within purine metabolism; AMP biosynthesis via salvage pathway; AMP from ADP: step 1/1. Functionally, catalyzes the reversible transfer of the terminal phosphate group between ATP and AMP. Plays an important role in cellular energy homeostasis and in adenine nucleotide metabolism. In Campylobacter jejuni subsp. jejuni serotype O:6 (strain 81116 / NCTC 11828), this protein is Adenylate kinase.